Consider the following 245-residue polypeptide: MAEPKYKRVLIKLSGEALAGEKGVGIDLPTVQAIAKEIAEVADSGIQIALVIGGGNLWRGEPAAEAGMDRVQADYTGMLGTTMNALVMADSLKQLGVDTRVQTAIDMKSVAEPYIRGRALRHFEKGRIVIFAAGIGSPYFSTDTTAALRAAEIESDAILMAKNGVDGVYNDDPRKNADAVKFDKLTHVEVIKRGLKIMDATASTLSMDNDIDLVVFNMNEPGNIKRVIFGEQIGTTVSNKAELRK.

12 to 15 (KLSG) contacts ATP. Positions 20-25 (GEKGVG) are involved in allosteric activation by GTP. UMP is bound at residue G54. Residues G55 and R59 each coordinate ATP. UMP contacts are provided by residues D74 and 135-142 (IGSPYFST). The ATP site is built by N163, Y169, and D172.

It belongs to the UMP kinase family. In terms of assembly, homohexamer.

It localises to the cytoplasm. The catalysed reaction is UMP + ATP = UDP + ADP. It participates in pyrimidine metabolism; CTP biosynthesis via de novo pathway; UDP from UMP (UMPK route): step 1/1. Its activity is regulated as follows. Allosterically activated by GTP. Inhibited by UTP. Its function is as follows. Catalyzes the reversible phosphorylation of UMP to UDP. This chain is Uridylate kinase, found in Streptococcus thermophilus (strain ATCC BAA-491 / LMD-9).